The chain runs to 157 residues: Subgroup A Rous sarcoma virus receptor pg950 (157 aa).

Positions 1–19 (MARLLPALLLLLLPGNVTG) are cleaved as a signal peptide. Asparagine 20 and asparagine 24 each carry an N-linked (GlcNAc...) asparagine glycan. The Extracellular portion of the chain corresponds to 20 to 102 (NGSGNGSLSR…RALPARNHGR (83 aa)). The LDL-receptor class A domain maps to 28–71 (SRCPPGQFRCSEPPGAHGECYPQDWLCDGHPDCDDGRDEWGCGT). Cystine bridges form between cysteine 30-cysteine 47, cysteine 37-cysteine 60, and cysteine 54-cysteine 69. A glycan (N-linked (GlcNAc...) asparagine) is linked at asparagine 81. Residues 103–125 (MWMLITAVLLCCLVAVGGIAAWG) traverse the membrane as a helical segment. The Cytoplasmic portion of the chain corresponds to 126 to 157 (KSKAKSRSDIFSLASASKELLVPDKSQADLFS).

In terms of assembly, (Microbial infection) Interacts with Rous sarcoma virus envelope protein; this interaction allows the viral attachment.

Its subcellular location is the membrane. Its function is as follows. Responsible for susceptibility to the retrovirus subgroup A Rous sarcoma virus. The chain is Subgroup A Rous sarcoma virus receptor pg950 from Coturnix japonica (Japanese quail).